We begin with the raw amino-acid sequence, 458 residues long: Ammonium transporter Rh type B (458 aa).

The Cytoplasmic segment spans residues 1-13; it reads MAGSPSRAAGRRL. Residues 14–34 form a helical membrane-spanning segment; sequence QLPLLCLFLQGATAVLFAVFV. At 35 to 61 the chain is on the extracellular side; sequence RYNHKTDAALWHRGNHSNADNEFYFRY. A glycan (N-linked (GlcNAc...) asparagine) is linked at N49. A helical transmembrane segment spans residues 62-82; it reads PSFQDVHAMVFVGFGFLMVFL. The Cytoplasmic portion of the chain corresponds to 83–86; it reads QRYG. Residues 87–107 form a helical membrane-spanning segment; sequence FSSVGFTFLLAAFALQWSTLV. At 108–124 the chain is on the extracellular side; the sequence is QGFLHSFHSGHIHVGVE. Residues 125 to 145 traverse the membrane as a helical segment; sequence SMINADFCAGAVLISFGAVLG. Topologically, residues 146-149 are cytoplasmic; it reads KTGP. A helical transmembrane segment spans residues 150–170; sequence AQLLLMALLEVVLFGINEFVL. Over 171 to 178 the chain is Extracellular; that stretch reads LHLLGVRD. A helical transmembrane segment spans residues 179–201; the sequence is AGGSMTIHTFGAYFGLVLSRVLY. The Cytoplasmic segment spans residues 202–219; that stretch reads RPQLEKSKHRQGSVYHSD. The helical transmembrane segment at 220-240 threads the bilayer; that stretch reads LFAMIGTIFLWIFWPSFNSAL. The Extracellular segment spans residues 241-251; that stretch reads TALGAGQHRTA. A helical membrane pass occupies residues 252 to 272; that stretch reads LNTYYSLAASTLGTFALSALV. Topologically, residues 273-282 are cytoplasmic; sequence GEDGRLDMVH. Residues 283 to 303 traverse the membrane as a helical segment; it reads IQNAALAGGVVVGTSSEMMLT. P304 is a topological domain (extracellular). A helical transmembrane segment spans residues 305–325; sequence FGALAAGFLAGTVSTLGYKFF. Residues 326–346 lie on the Cytoplasmic side of the membrane; that stretch reads TPILESKFKVQDTCGVHNLHG. A helical membrane pass occupies residues 347 to 367; it reads MPGVLGALLGVLVAGLATHEA. Residues 368–393 lie on the Extracellular side of the membrane; sequence YGDGLESVFPLIAEGQRSATSQAMLQ. Residues 394–414 form a helical membrane-spanning segment; that stretch reads LFGLFVTLMFASVGGGLGGLL. Residues 415–458 are Cytoplasmic-facing; sequence LKLPFLDSPPDSQCYEDQVHWQVPGEHEDEAQRPLRVEEADTQA. The interval 416-424 is interaction with ANK3; the sequence is KLPFLDSPP. Positions 429-432 match the Basolateral sorting signal motif; it reads YEDQ. Residues 439–458 form a disordered region; it reads GEHEDEAQRPLRVEEADTQA. The span at 444–458 shows a compositional bias: basic and acidic residues; it reads EAQRPLRVEEADTQA.

It belongs to the ammonium transporter (TC 2.A.49) family. Rh subfamily. Interacts (via C-terminus) with ANK2 and ANK3; required for targeting to the basolateral membrane. N-glycosylated.

The protein localises to the cell membrane. Its subcellular location is the basolateral cell membrane. The catalysed reaction is NH4(+)(in) = NH4(+)(out). It carries out the reaction methylamine(out) = methylamine(in). It catalyses the reaction CO2(out) = CO2(in). Its function is as follows. Ammonium transporter involved in the maintenance of acid-base homeostasis. Transports ammonium and its related derivative methylammonium across the basolateral plasma membrane of epithelial cells likely contributing to renal transepithelial ammonia transport and ammonia metabolism. May transport either NH4(+) or NH3 ammonia species predominantly mediating an electrogenic NH4(+) transport. May act as a CO2 channel providing for renal acid secretion. This Macaca mulatta (Rhesus macaque) protein is Ammonium transporter Rh type B (RHBG).